The following is a 572-amino-acid chain: uncharacterized protein (572 aa).

Residues 553 to 572 (PSPAPKPVTVRKKKGNSPIS) form a disordered region. The span at 561 to 572 (TVRKKKGNSPIS) shows a compositional bias: basic residues.

This is an uncharacterized protein from Homo sapiens (Human).